The chain runs to 1120 residues: Mechanosensitive channel MscK (1120 aa).

A signal peptide spans 1 to 33; the sequence is MTMFQYYKRSRHFVFSAFIAFVFVLLCQNTAFA. The Periplasmic portion of the chain corresponds to 34-499; sequence RASSNGDLPT…MKITVNWQKA (466 aa). 3 coiled-coil regions span residues 43-98, 126-266, and 360-422; these read TKAD…VAEA, STLS…TLTE, and DELE…RREL. The helical transmembrane segment at 500-520 threads the bilayer; the sequence is WPAVFIAFLAGLPLLLIAGLI. Over 521–560 the chain is Cytoplasmic; the sequence is HWRLGWLKAYQQKLASAVGSLRNDSQLNTPKAILIDLIRA. The chain crosses the membrane as a helical span at residues 561–581; that stretch reads LPVCLIILAVGLILLTMQLNI. Residue serine 582 is a topological domain, periplasmic. A helical transmembrane segment spans residues 583–603; it reads ELLWSFSKKLAIFWLVFGLCW. The Cytoplasmic segment spans residues 604-634; sequence KVLEKNGVAVRHFGMPEQQTSHWRRQIVRIS. A helical transmembrane segment spans residues 635 to 655; the sequence is LALLPIHFWSVVAELSPLHLM. The Periplasmic portion of the chain corresponds to 656–657; that stretch reads DD. Residues 658–678 traverse the membrane as a helical segment; it reads VLGQAMIFFNLLLIAFLVWPM. The Cytoplasmic portion of the chain corresponds to 679–692; it reads CRESWRDKESHTMR. A helical membrane pass occupies residues 693–713; it reads LVTITVLSIIPIALMVLTATG. The Periplasmic portion of the chain corresponds to 714–728; that stretch reads YFYTTLRLAGRWIET. The chain crosses the membrane as a helical span at residues 729 to 749; that stretch reads VYLVIIWNLLYQTVLRGLSVA. Residues 750–796 are Cytoplasmic-facing; sequence ARRIAWRRALARRQNLVKEGAEGAEPPEEPTIALEQVNQQTLRITML. Residues 797-817 traverse the membrane as a helical segment; it reads LMFALFGVMFWAIWSDLITVF. At 818-839 the chain is on the periplasmic side; the sequence is SYLDSITLWHYNGTEAGAAVVK. The chain crosses the membrane as a helical span at residues 840–860; that stretch reads NVTMGSLLFAIIASMVAWALI. Residues 861-886 lie on the Cytoplasmic side of the membrane; that stretch reads RNLPGLLEVLVLSRLNMRQGASYAIT. Residues 887 to 907 traverse the membrane as a helical segment; that stretch reads TILNYIIIAVGAMTVFGSLGV. At 908 to 921 the chain is on the periplasmic side; that stretch reads SWDKLQWLAAALSV. A helical transmembrane segment spans residues 922 to 942; that stretch reads GLGFGLQEIFGNFVSGLIILF. Residues 943–1120 lie on the Cytoplasmic side of the membrane; the sequence is ERPVRIGDTV…KGDDPTPAVG (178 aa). The stretch at 1057 to 1081 forms a coiled coil; sequence YVRELRDRSRTVDELNRTIDQLCRE.

It belongs to the MscS (TC 1.A.23) family.

It is found in the cell inner membrane. Its function is as follows. Mechanosensitive channel that opens in response to membrane tension and specific ionic conditions. Requires high concentrations of external K(+), NH(4)(+), Rb(+) or Cs(+) to gate. May participate in the regulation of osmotic pressure changes within the cell, although it does not appear to have a major role in osmolarity regulation. Forms an ion channel of 1.0 nanosiemens conductance. The channel can remain active for between 30 seconds and over 3 minutes; it does not desensitize upon extended pressure. Its activity is masked in wild-type cells by the MscS channel. This Escherichia coli (strain K12) protein is Mechanosensitive channel MscK (mscK).